A 245-amino-acid chain; its full sequence is 1-(5-phosphoribosyl)-5-[(5-phosphoribosylamino)methylideneamino] imidazole-4-carboxamide isomerase (245 aa).

Residue aspartate 8 is the Proton acceptor of the active site. The active-site Proton donor is aspartate 131.

This sequence belongs to the HisA/HisF family.

The protein localises to the cytoplasm. The enzyme catalyses 1-(5-phospho-beta-D-ribosyl)-5-[(5-phospho-beta-D-ribosylamino)methylideneamino]imidazole-4-carboxamide = 5-[(5-phospho-1-deoxy-D-ribulos-1-ylimino)methylamino]-1-(5-phospho-beta-D-ribosyl)imidazole-4-carboxamide. The protein operates within amino-acid biosynthesis; L-histidine biosynthesis; L-histidine from 5-phospho-alpha-D-ribose 1-diphosphate: step 4/9. In Neisseria meningitidis serogroup C / serotype 2a (strain ATCC 700532 / DSM 15464 / FAM18), this protein is 1-(5-phosphoribosyl)-5-[(5-phosphoribosylamino)methylideneamino] imidazole-4-carboxamide isomerase.